The following is a 205-amino-acid chain: Glycerol-3-phosphate acyltransferase (205 aa).

5 helical membrane passes run 4–24, 80–100, 107–127, 130–150, and 155–175; these read IAPG…AILV, PFWL…PVFF, GVAT…GVMA, WLLT…SALI, and VWWF…LILL.

The protein belongs to the PlsY family. As to quaternary structure, probably interacts with PlsX.

The protein resides in the cell inner membrane. The enzyme catalyses an acyl phosphate + sn-glycerol 3-phosphate = a 1-acyl-sn-glycero-3-phosphate + phosphate. Its pathway is lipid metabolism; phospholipid metabolism. In terms of biological role, catalyzes the transfer of an acyl group from acyl-phosphate (acyl-PO(4)) to glycerol-3-phosphate (G3P) to form lysophosphatidic acid (LPA). This enzyme utilizes acyl-phosphate as fatty acyl donor, but not acyl-CoA or acyl-ACP. This Klebsiella pneumoniae subsp. pneumoniae (strain ATCC 700721 / MGH 78578) protein is Glycerol-3-phosphate acyltransferase.